Consider the following 673-residue polypeptide: MADPATYRPAPGTIPVEPGVYKFRDSYGRVIYVGKAKSLRSRLNSYFADVASLHPRTKQMVTTAASVEWTVVSTEVEALQLEYNWIKEFDPRFNVRYRDDKSYPVLAVTLNEEYPRLFVYRGARKKGVRYFGPYAHAWAIRETLDLLLRVFPARTCSTGVFKRHNQIGRPCLLGYIDKCSAPCVGRVSAEEHRAIVEDFCDFLAGRTDKMVRELERRMHAAAEDLDFETAARLRDDVQALRRALEKQAVVLGTGTDADVIAFATDELEVAVQIFHVRDGRVRGQRGWVVDKSGDAVDSGTGDDETGALVEQFLTQFYGEQVAYADQTPDEQPATVVPREVLVPQLPAGHEQLQEWLSRLRGSAVRLRVPQRGDKKALAETVERNAKEALAQHKLKRAGDLTSRSAALQDIQDALDLDSAPLRIECVDISHVQGTDVVASLVVFEDGLPRKSDYRHYAIKEAAGEGRSDDVGSIAEVTRRRFYRLRKERDEAERDELDGTAAGAPLVDDDETPTSRPGIDPTTGRPRKFAYPPNLYVVDGGAPQVAAAAEVLDELGITDVAVIGLAKRLEEVWVPGEPDPVILPRNSEALFLLQRVRDEAHRFAITFHRSKRSRRMTASALDSVRGLGAARRTALVTHFGSVAKLKEATVEEITEVPGIGVATAKAVLAALHQE.

Residues 16–95 (VEPGVYKFRD…IKEFDPRFNV (80 aa)) enclose the GIY-YIG domain. The UVR domain occupies 208–243 (DKMVRELERRMHAAAEDLDFETAARLRDDVQALRRA). Positions 488–526 (RDEAERDELDGTAAGAPLVDDDETPTSRPGIDPTTGRPR) are disordered.

Belongs to the UvrC family. As to quaternary structure, interacts with UvrB in an incision complex.

It is found in the cytoplasm. In terms of biological role, the UvrABC repair system catalyzes the recognition and processing of DNA lesions. UvrC both incises the 5' and 3' sides of the lesion. The N-terminal half is responsible for the 3' incision and the C-terminal half is responsible for the 5' incision. In Nocardia farcinica (strain IFM 10152), this protein is UvrABC system protein C.